A 163-amino-acid chain; its full sequence is Photosystem II extrinsic protein V (163 aa).

Residues 1–26 (MFKKSSQLFSLVFFTIFSIFIGTASA) form the signal peptide. Positions 63, 66, 67, and 130 each coordinate heme c.

It belongs to the cytochrome c family. PsbV subfamily. PSII is composed of 1 copy each of membrane proteins PsbA, PsbB, PsbC, PsbD, PsbE, PsbF, PsbH, PsbI, PsbJ, PsbK, PsbL, PsbM, PsbT, PsbY, PsbZ, Psb30/Ycf12, at least 3 peripheral proteins of the oxygen-evolving complex and a large number of cofactors. It forms dimeric complexes. Heme c serves as cofactor.

It is found in the plastid. The protein resides in the chloroplast thylakoid membrane. One of the extrinsic, lumenal subunits of photosystem II (PSII). PSII is a light-driven water plastoquinone oxidoreductase, using light energy to abstract electrons from H(2)O, generating a proton gradient subsequently used for ATP formation. The extrinsic proteins stabilize the structure of photosystem II oxygen-evolving complex (OEC), the ion environment of oxygen evolution and protect the OEC against heat-induced inactivation. The sequence is that of Photosystem II extrinsic protein V from Phaeodactylum tricornutum (strain CCAP 1055/1).